Reading from the N-terminus, the 182-residue chain is ATP-dependent protease subunit HslV (182 aa).

The active site involves Thr10. 3 residues coordinate Na(+): Ala166, Cys169, and Ser172.

This sequence belongs to the peptidase T1B family. HslV subfamily. In terms of assembly, a double ring-shaped homohexamer of HslV is capped on each side by a ring-shaped HslU homohexamer. The assembly of the HslU/HslV complex is dependent on binding of ATP.

It localises to the cytoplasm. It carries out the reaction ATP-dependent cleavage of peptide bonds with broad specificity.. Allosterically activated by HslU binding. Its function is as follows. Protease subunit of a proteasome-like degradation complex believed to be a general protein degrading machinery. The protein is ATP-dependent protease subunit HslV of Rickettsia typhi (strain ATCC VR-144 / Wilmington).